Here is a 61-residue protein sequence, read N- to C-terminus: Bacteriocin leucocin-A (61 aa).

A propeptide spanning residues 1-24 is cleaved from the precursor; the sequence is MMNMKPTESYEQLDNSALEQVVGG. A disulfide bridge connects residues Cys-33 and Cys-38.

The protein belongs to the bacteriocin class IIA/YGNGV family.

It is found in the secreted. Its function is as follows. Inhibits a wide spectrum of lactic acid bacteria. This Leuconostoc gelidum protein is Bacteriocin leucocin-A (lcnA).